We begin with the raw amino-acid sequence, 475 residues long: UDP-N-acetylmuramate--L-alanine ligase (475 aa).

ATP is bound at residue 117–123 (GTHGKTT).

It belongs to the MurCDEF family.

The protein resides in the cytoplasm. It carries out the reaction UDP-N-acetyl-alpha-D-muramate + L-alanine + ATP = UDP-N-acetyl-alpha-D-muramoyl-L-alanine + ADP + phosphate + H(+). It functions in the pathway cell wall biogenesis; peptidoglycan biosynthesis. In terms of biological role, cell wall formation. The polypeptide is UDP-N-acetylmuramate--L-alanine ligase (Chlorobaculum tepidum (strain ATCC 49652 / DSM 12025 / NBRC 103806 / TLS) (Chlorobium tepidum)).